We begin with the raw amino-acid sequence, 157 residues long: Ribosome maturation factor RimP (157 aa).

This sequence belongs to the RimP family.

It localises to the cytoplasm. Required for maturation of 30S ribosomal subunits. This is Ribosome maturation factor RimP from Geobacillus sp. (strain WCH70).